A 572-amino-acid chain; its full sequence is Solute carrier family 22 member 16 (572 aa).

A helical membrane pass occupies residues I21–S41. N57 is a glycosylation site (N-linked (GlcNAc...) asparagine). Transmembrane regions (helical) follow at residues L156–S176, L183–F203, F208–V228, I244–V264, and W268–L288. N315 is a glycosylation site (N-linked (GlcNAc...) asparagine). The next 6 helical transmembrane spans lie at T359–N379, L389–M409, N416–P436, V441–I461, L476–I496, and I503–L523. N559 carries N-linked (GlcNAc...) asparagine glycosylation.

Belongs to the major facilitator (TC 2.A.1) superfamily. Organic cation transporter (TC 2.A.1.19) family.

It is found in the cell membrane. The catalysed reaction is (R)-carnitine(in) = (R)-carnitine(out). The enzyme catalyses spermidine(in) = spermidine(out). Functionally, facilitative organic cation transporter that mediates the transport of carnitine as well as the polyamine spermidine. Mediates the partially Na(+)-dependent bidirectional transport of carnitine. May mediate L-carnitine secretion from testis epididymal epithelium into the lumen which is involved in the maturation of spermatozoa. This chain is Solute carrier family 22 member 16 (SLC22A16), found in Bos taurus (Bovine).